An 873-amino-acid polypeptide reads, in one-letter code: Alanine--tRNA ligase (873 aa).

The Zn(2+) site is built by H559, H563, C661, and H665.

Belongs to the class-II aminoacyl-tRNA synthetase family. As to quaternary structure, homotetramer. Requires Zn(2+) as cofactor.

Its subcellular location is the cytoplasm. The catalysed reaction is tRNA(Ala) + L-alanine + ATP = L-alanyl-tRNA(Ala) + AMP + diphosphate. Functionally, catalyzes the attachment of alanine to tRNA(Ala) in a two-step reaction: alanine is first activated by ATP to form Ala-AMP and then transferred to the acceptor end of tRNA(Ala). Also edits incorrectly charged Ser-tRNA(Ala) and Gly-tRNA(Ala) via its editing domain. In Wigglesworthia glossinidia brevipalpis, this protein is Alanine--tRNA ligase.